The primary structure comprises 159 residues: Ribosomal RNA large subunit methyltransferase H (159 aa).

Residues Leu-76, Gly-108, and 127–132 each bind S-adenosyl-L-methionine; that span reads FSKMTF.

Belongs to the RNA methyltransferase RlmH family. In terms of assembly, homodimer.

It localises to the cytoplasm. It catalyses the reaction pseudouridine(1915) in 23S rRNA + S-adenosyl-L-methionine = N(3)-methylpseudouridine(1915) in 23S rRNA + S-adenosyl-L-homocysteine + H(+). In terms of biological role, specifically methylates the pseudouridine at position 1915 (m3Psi1915) in 23S rRNA. The chain is Ribosomal RNA large subunit methyltransferase H from Clostridium kluyveri (strain NBRC 12016).